We begin with the raw amino-acid sequence, 116 residues long: UPF0102 protein LBJ_1427 (116 aa).

It belongs to the UPF0102 family.

The polypeptide is UPF0102 protein LBJ_1427 (Leptospira borgpetersenii serovar Hardjo-bovis (strain JB197)).